The following is a 192-amino-acid chain: MSRIELGGVLGKTFGKVHHRLISRVSEAGVALAKTVPGFEQFMISSQRRGLTYSVFKGKKNIGVDDLGFPVTGDVIRIVPVIIGSKKAGVLQTILGAVLVAVGVVLNFTPWAAASPFFYKLGAAVMLGGVVQMLSPQPAGLASKQSSDNRASYAFGGVTNTAAQGYPVPLLYGRRRIGGAIISAGIYVEDQQ.

Belongs to the lambda-like tail tip protein I family.

It is found in the host cytoplasm. In terms of biological role, plays a role in tail tip complex assembly. The tail tip complex is assembled successively with three tail tip proteins J, one tail tip protein I, one tail tip protein L and one tail tip protein K. The tail tip complex interacts with tail measure protein to initiate tail tube assembly. The formation of the tail tip complex is completed by the addition of tail tip protein M, which is followed by tail tube polymerization. May be excluded form tail tip during maturation and would be absent from virions. The sequence is that of Tail tip assembly protein I from Escherichia phage N15 (Bacteriophage N15).